A 406-amino-acid chain; its full sequence is Flavohemoprotein (406 aa).

The region spanning 6–144 (VLLDKKTTEI…IADIFISVEK (139 aa)) is the Globin domain. His-91 contacts heme b. Residues Tyr-101 and Glu-143 each act as charge relay system in the active site. The tract at residues 155-406 (GGWTGFRDFK…LFGPLEPIAK (252 aa)) is reductase. The region spanning 158–267 (TGFRDFKVIK…SAPAGDFILD (110 aa)) is the FAD-binding FR-type domain. Residues Tyr-196 and 212–215 (RQYS) contribute to the FAD site. 280–285 (GVGLTP) serves as a coordination point for NADP(+). 397–400 (LFGP) is a binding site for FAD.

This sequence belongs to the globin family. Two-domain flavohemoproteins subfamily. In the C-terminal section; belongs to the flavoprotein pyridine nucleotide cytochrome reductase family. Heme b is required as a cofactor. Requires FAD as cofactor.

It carries out the reaction 2 nitric oxide + NADPH + 2 O2 = 2 nitrate + NADP(+) + H(+). It catalyses the reaction 2 nitric oxide + NADH + 2 O2 = 2 nitrate + NAD(+) + H(+). Its function is as follows. Is involved in NO detoxification in an aerobic process, termed nitric oxide dioxygenase (NOD) reaction that utilizes O(2) and NAD(P)H to convert NO to nitrate, which protects the bacterium from various noxious nitrogen compounds. Therefore, plays a central role in the inducible response to nitrosative stress. The chain is Flavohemoprotein from Oceanobacillus iheyensis (strain DSM 14371 / CIP 107618 / JCM 11309 / KCTC 3954 / HTE831).